A 197-amino-acid polypeptide reads, in one-letter code: Phosphoheptose isomerase (197 aa).

The SIS domain maps to 40 to 197 (CIASIAQGGK…LVEHSIFGKQ (158 aa)). 55–57 (NGG) contributes to the substrate binding site. Zn(2+) is bound by residues His64 and Glu68. Residues Glu68, 97–98 (ND), 123–125 (STS), Ser128, and Gln175 contribute to the substrate site. Residues Gln175 and His183 each coordinate Zn(2+).

It belongs to the SIS family. GmhA subfamily. As to quaternary structure, homotetramer. The cofactor is Zn(2+).

The protein resides in the cytoplasm. It catalyses the reaction 2 D-sedoheptulose 7-phosphate = D-glycero-alpha-D-manno-heptose 7-phosphate + D-glycero-beta-D-manno-heptose 7-phosphate. It functions in the pathway carbohydrate biosynthesis; D-glycero-D-manno-heptose 7-phosphate biosynthesis; D-glycero-alpha-D-manno-heptose 7-phosphate and D-glycero-beta-D-manno-heptose 7-phosphate from sedoheptulose 7-phosphate: step 1/1. It participates in capsule biogenesis; capsule polysaccharide biosynthesis. In terms of biological role, catalyzes the isomerization of sedoheptulose 7-phosphate in D-glycero-D-manno-heptose 7-phosphate. In Burkholderia mallei (strain ATCC 23344), this protein is Phosphoheptose isomerase.